The sequence spans 221 residues: Octanoyltransferase (221 aa).

Residues 35-221 (ESYENRIIFC…RELLAALLSK (187 aa)) enclose the BPL/LPL catalytic domain. Residues 80–87 (RGGDITYH), 152–154 (AIG), and 165–167 (GLA) contribute to the substrate site. The Acyl-thioester intermediate role is filled by Cys-183.

Belongs to the LipB family.

It is found in the cytoplasm. It catalyses the reaction octanoyl-[ACP] + L-lysyl-[protein] = N(6)-octanoyl-L-lysyl-[protein] + holo-[ACP] + H(+). Its pathway is protein modification; protein lipoylation via endogenous pathway; protein N(6)-(lipoyl)lysine from octanoyl-[acyl-carrier-protein]: step 1/2. Its function is as follows. Catalyzes the transfer of endogenously produced octanoic acid from octanoyl-acyl-carrier-protein onto the lipoyl domains of lipoate-dependent enzymes. Lipoyl-ACP can also act as a substrate although octanoyl-ACP is likely to be the physiological substrate. In Bacteroides fragilis (strain YCH46), this protein is Octanoyltransferase.